Reading from the N-terminus, the 425-residue chain is MAKTIQAIRGMNDCSPTESLLWQWVEEKVRSVLQTYGYSEVRMPIVESTPLFARAIGEVTDVVSKEMYTFWDNDEQLTLRPEGTAGCVRAAIEHGWIYNNEQRLWYMGPMFRHERPQKGRYRQFHQVGVEVFGIANPEIDAELILLTARLWKQLGIFDHVTLQLNSIGSLESRQNYRSALVEFLQQHMDLLSEEEKERLVKNPLRILDTKNQVLQEVLNDAPKLLDYLDQESREHFSQLCDLLDAVGIQYEINPKLVRGLDYYNKTVFEWVTSALGAQGTVCGGGRYDGLVEQLGGHATCSVGFAMGLERLVLLVQEVNKQIVLPSAVDIYVVYFGEKTTLPAFQLAEKIRTELPHLRTMTHCGGGNFKKQFKRADKVGAKFALVIGETEVKTQQVVVKDLLGGAEQLSLALTDVVIYLKQAITQ.

It belongs to the class-II aminoacyl-tRNA synthetase family. In terms of assembly, homodimer.

Its subcellular location is the cytoplasm. The catalysed reaction is tRNA(His) + L-histidine + ATP = L-histidyl-tRNA(His) + AMP + diphosphate + H(+). This is Histidine--tRNA ligase from Histophilus somni (strain 2336) (Haemophilus somnus).